Here is a 1499-residue protein sequence, read N- to C-terminus: Phospholipid-transporting ATPase VA (1499 aa).

The tract at residues 1 to 53 (MEREPAGTEEPGPPGRRRRREGRTRTVRSNLLPPPGAEDPAAGAAKGERRRRR) is disordered. The Cytoplasmic segment spans residues 1–86 (MEREPAGTEE…KNLFEQFHRP (86 aa)). The segment covering 15–26 (GRRRRREGRTRT) has biased composition (basic residues). Residues 87–106 (ANVYFVFIALLNFVPAVNAF) traverse the membrane as a helical segment. The Exoplasmic loop segment spans residues 107–110 (QPGL). A helical transmembrane segment spans residues 111 to 128 (ALAPVLFILAITAFRDLW). The Cytoplasmic portion of the chain corresponds to 129–309 (EDYSRHRSDH…SKLERQMNCD (181 aa)). Residues 310-332 (VLWCVLLLVCMSLFSAVGHGLWI) traverse the membrane as a helical segment. The Exoplasmic loop portion of the chain corresponds to 333 to 362 (WRYQEKKSLFYVPKSDGSSLSPVTAAVYSF). The helical transmembrane segment at 363 to 384 (LTMIIVLQVLIPISLYVSIEIV) threads the bilayer. Over 385-1087 (KACQVYFINQ…GHWCYSRLAN (703 aa)) the chain is Cytoplasmic. Aspartate 427 serves as the catalytic 4-aspartylphosphate intermediate. Positions 427, 428, and 429 each coordinate ATP. A Mg(2+)-binding site is contributed by aspartate 427. Threonine 429 contacts Mg(2+). Residues 464–531 (ADSEEEEVVP…AFSSPMEKDI (68 aa)) are disordered. The residue at position 466 (serine 466) is a Phosphoserine. Residues 477-499 (SVSQRGSIGSHQSVRVVHRTQST) show a composition bias toward polar residues. Residues glutamate 700, phenylalanine 742, lysine 766, arginine 809, threonine 889, glycine 890, aspartate 891, arginine 1005, and lysine 1011 each contribute to the ATP site. A Mg(2+)-binding site is contributed by aspartate 1031. ATP contacts are provided by asparagine 1034 and aspartate 1035. Residue aspartate 1035 participates in Mg(2+) binding. Residues 1088–1108 (MVLYFFYKNTMFVGLLFWFQF) traverse the membrane as a helical segment. Topologically, residues 1109–1119 (FCGFSASTMID) are exoplasmic loop. The helical transmembrane segment at 1120-1140 (QWYLIFFNLLFSSLPPLVTGV) threads the bilayer. Over 1141 to 1170 (LDRDVPANVLLTNPQLYKSGQNMEEYRPRT) the chain is Cytoplasmic. Residues 1171 to 1192 (FWFNMADAAFQSLVCFSIPYLA) traverse the membrane as a helical segment. At 1193 to 1199 (YYDSNVD) the chain is on the exoplasmic loop side. The chain crosses the membrane as a helical span at residues 1200–1222 (LFTWGTPIVTIALLTFLLHLGIE). Residues 1223–1228 (TKTWTW) lie on the Cytoplasmic side of the membrane. A helical transmembrane segment spans residues 1229-1249 (LNWITCGFSVLLFFTVALIYN). At 1250-1267 (ASCATCYPPSNPYWTMQA) the chain is on the exoplasmic loop side. Residues 1268 to 1292 (LLGDPVFYLTCLMTPVAALLPRLFF) form a helical membrane-spanning segment. Topologically, residues 1293–1499 (RSLQGRVFPT…LIGASSRRSQ (207 aa)) are cytoplasmic. Disordered stretches follow at residues 1311–1356 (TRKS…PSWH) and 1464–1499 (DGQAGRGLPVQPHSGRSGLQGPDHRLLIGASSRRSQ). Over residues 1330–1340 (LPKDSGTEHSS) the composition is skewed to basic and acidic residues. Over residues 1341 to 1356 (GRTVKTSVPLSQPSWH) the composition is skewed to polar residues.

This sequence belongs to the cation transport ATPase (P-type) (TC 3.A.3) family. Type IV subfamily. Component of a P4-ATPase flippase complex which consists of a catalytic alpha subunit ATP10A and an accessory beta subunit TMEM30A. Mg(2+) serves as cofactor. In terms of processing, autophosphorylated at the conserved aspartate of the P-type ATPase signature sequence. Widely expressed, with highest levels in kidney, followed by lung, brain, prostate, testis, ovary and small intestine.

Its subcellular location is the cell membrane. The protein localises to the endoplasmic reticulum membrane. It catalyses the reaction ATP + H2O + phospholipidSide 1 = ADP + phosphate + phospholipidSide 2.. It carries out the reaction a 1,2-diacyl-sn-glycero-3-phosphocholine(out) + ATP + H2O = a 1,2-diacyl-sn-glycero-3-phosphocholine(in) + ADP + phosphate + H(+). The catalysed reaction is a beta-D-glucosyl-(1&lt;-&gt;1')-N-acylsphing-4-enine(out) + ATP + H2O = a beta-D-glucosyl-(1&lt;-&gt;1')-N-acylsphing-4-enine(in) + ADP + phosphate + H(+). With respect to regulation, inhibited under hypotonic conditions. In terms of biological role, catalytic component of P4-ATPase flippase complex, which catalyzes the hydrolysis of ATP coupled to the transport of phosphatidylcholine (PC) from the outer to the inner leaflet of the plasma membrane. Initiates inward plasma membrane bending and recruitment of Bin/amphiphysin/Rvs (BAR) domain-containing proteins involved in membrane tubulation and cell trafficking. Facilitates ITGB1/beta1 integrin endocytosis, delaying cell adhesion and cell spreading on extracellular matrix. Has low flippase activity toward glucosylceramide (GlcCer). The sequence is that of Phospholipid-transporting ATPase VA from Homo sapiens (Human).